The primary structure comprises 97 residues: UPF0416 protein RC0826 (97 aa).

The signal sequence occupies residues 1–33 (MRIFVKAAISTAAWRFYAHPTVAMGICVGTALA).

Belongs to the UPF0416 family.

In Rickettsia conorii (strain ATCC VR-613 / Malish 7), this protein is UPF0416 protein RC0826.